The chain runs to 189 residues: MAQERRGSREDRQNREERDSEFVDKLVAINRVAKVVKGGRRFGFAALVVVGDQKGRVGFGHGKAREVPEAIRKATEAAKRDLIFVPLRGGRTLHHDVNGRHGAGKVLLRSAKAGTGIIAGGPMRAVFETLGVHDVVAKSTGSSNPYNMVRATFDALKNQMHPKDIAAQRGMKYATLQARRVAAGAASEE.

An S5 DRBM domain is found at 22–85; the sequence is FVDKLVAINR…EAAKRDLIFV (64 aa).

This sequence belongs to the universal ribosomal protein uS5 family. As to quaternary structure, part of the 30S ribosomal subunit. Contacts proteins S4 and S8.

In terms of biological role, with S4 and S12 plays an important role in translational accuracy. Its function is as follows. Located at the back of the 30S subunit body where it stabilizes the conformation of the head with respect to the body. This chain is Small ribosomal subunit protein uS5, found in Sinorhizobium fredii (strain NBRC 101917 / NGR234).